The primary structure comprises 555 residues: Developmental and secondary metabolism regulator veA (555 aa).

3 disordered regions span residues 1-23, 39-60, and 234-533; these read MATR…RITR, ERAR…VDPP, and RRRG…TLLS. Over residues 13–23 the composition is skewed to basic and acidic residues; sequence ETEHSVSRITR. Positions 25-228 constitute a Velvet domain; that stretch reads GKRITYKLNV…AEQGCRVRIR (204 aa). The Nuclear localization signal motif lies at 39–44; the sequence is ERARAC. Residues 239 to 258 are compositionally biased toward basic and acidic residues; it reads KRSDDYDFDEERSHRGRIPD. The span at 311 to 331 shows a compositional bias: pro residues; it reads AIPPAPAPAPPSSSTPTPVAP. 2 stretches are compositionally biased toward polar residues: residues 336–372 and 380–389; these read RSSS…TQVY and HARNPSTSTE. Positions 439 to 479 are PEST; the sequence is QTPSNAAPSLPPIASISAEYSNNLPQPPSNLAPSPNREPRG. Composition is skewed to basic and acidic residues over residues 492–503 and 519–533; these read RPHEDAFSHSER and ADRR…TLLS.

The protein belongs to the velvet family. VeA subfamily. Component of the heterotrimeric velvet complex composed of laeA, veA and velB; VeA acting as a bridging protein between laeA and velB.

It is found in the nucleus. The protein localises to the cytoplasm. Its function is as follows. Component of the velvet transcription factor complex that controls sexual/asexual developmental ratio in response to light, promoting sexual development in the darkness while stimulating asexual sporulation under illumination. The velvet complex hat acts as a global regulator for secondary metabolite gene expression. Increases spore dispersing capacity by impacting conidiophore architecture. The protein is Developmental and secondary metabolism regulator veA of Aspergillus niger (strain ATCC 1015 / CBS 113.46 / FGSC A1144 / LSHB Ac4 / NCTC 3858a / NRRL 328 / USDA 3528.7).